Here is a 142-residue protein sequence, read N- to C-terminus: Putative pre-16S rRNA nuclease (142 aa).

It belongs to the YqgF nuclease family.

It localises to the cytoplasm. Its function is as follows. Could be a nuclease involved in processing of the 5'-end of pre-16S rRNA. This is Putative pre-16S rRNA nuclease from Nitratidesulfovibrio vulgaris (strain DSM 19637 / Miyazaki F) (Desulfovibrio vulgaris).